Here is a 98-residue protein sequence, read N- to C-terminus: Large ribosomal subunit protein bL27 (98 aa).

A compositionally biased stretch (polar residues) spans 1 to 11 (MASKASGGSTR). Residues 1 to 20 (MASKASGGSTRNGRDSISKR) are disordered.

It belongs to the bacterial ribosomal protein bL27 family.

The polypeptide is Large ribosomal subunit protein bL27 (Aquifex aeolicus (strain VF5)).